Consider the following 172-residue polypeptide: Myosin regulatory light polypeptide 9 (172 aa).

The segment covering 1–16 (MSSKRAKAKTTKKRPQ) has biased composition (basic residues). A disordered region spans residues 1-20 (MSSKRAKAKTTKKRPQRATS). Ser2 is modified (N-acetylserine). Thr19 is subject to Phosphothreonine; by MLCK, CIT and ROCK2. Ser20 is subject to Phosphoserine; by CDC42BP, CIT, MLCK, PAK1, ROCK1, ROCK2, DAPK1, DAPK2 and ZIPK/DAPK3. EF-hand domains follow at residues 29–64 (SQIQEFKEAFNMIDQNRDGFIDKEDLHDMLASLGKN), 98–133 (DPEDVIRNAFACFDEEASGFIHEDHLRELLTTMGDR), and 134–169 (FTDEEVDEMYREAPIDKKGNFNYVEFTRILKHGAKD). Ca(2+)-binding residues include Asp42, Asn44, Asp46, and Asp53.

Myosin is a hexamer of 2 heavy chains and 4 light chains: interacts with myosin heavy chain MYO19. Interacts with LUZP1; the interaction results in inhibition of phosphorylation of MYL9 by DAPK3. In terms of processing, phosphorylation increases the actin-activated myosin ATPase activity and thereby regulates the contractile activity. It is required to generate the driving force in the migration of the cells but not necessary for localization of myosin-2 at the leading edge. Phosphorylation is required for myotube formation. Phosphorylated by DAPK3; DAPK3-mediated phosphorylation is inhibited by LUZP1.

The protein localises to the cytoplasm. It localises to the cytoskeleton. It is found in the cell cortex. Functionally, myosin regulatory subunit that plays an important role in regulation of both smooth muscle and nonmuscle cell contractile activity via its phosphorylation. Implicated in cytokinesis, receptor capping, and cell locomotion. In myoblasts, regulates PIEZO1-dependent cortical actomyosin assembly involved in myotube formation. The sequence is that of Myosin regulatory light polypeptide 9 (Myl9) from Mus musculus (Mouse).